A 404-amino-acid polypeptide reads, in one-letter code: D-galactonate dehydratase family member PC1_0802 (404 aa).

Substrate contacts are provided by asparagine 37 and histidine 122. Tyrosine 159 serves as the catalytic Proton donor/acceptor. Residue aspartate 212 coordinates Mg(2+). Histidine 214 serves as the catalytic Proton donor/acceptor. Residues glutamate 238 and glutamate 264 each contribute to the Mg(2+) site. Substrate-binding residues include glutamate 264, arginine 285, histidine 314, aspartate 318, and glutamate 341.

Belongs to the mandelate racemase/muconate lactonizing enzyme family. GalD subfamily. The cofactor is Mg(2+).

It catalyses the reaction D-mannonate = 2-dehydro-3-deoxy-D-gluconate + H2O. Has low D-mannonate dehydratase activity (in vitro), suggesting that this is not a physiological substrate and that it has no significant role in D-mannonate degradation in vivo. Has no detectable activity with a panel of 70 other acid sugars (in vitro). In Pectobacterium carotovorum subsp. carotovorum (strain PC1), this protein is D-galactonate dehydratase family member PC1_0802.